Here is a 162-residue protein sequence, read N- to C-terminus: Phosphopantetheine adenylyltransferase (162 aa).

Thr-9 serves as a coordination point for substrate. Residues 9 to 10 (TF) and His-17 contribute to the ATP site. Residues Lys-41, Leu-77, and Arg-91 each contribute to the substrate site. ATP-binding positions include 92 to 94 (GLR), Glu-102, and 127 to 133 (RQAIASK).

Belongs to the bacterial CoaD family. Homohexamer. Requires Mg(2+) as cofactor.

The protein localises to the cytoplasm. The enzyme catalyses (R)-4'-phosphopantetheine + ATP + H(+) = 3'-dephospho-CoA + diphosphate. The protein operates within cofactor biosynthesis; coenzyme A biosynthesis; CoA from (R)-pantothenate: step 4/5. Reversibly transfers an adenylyl group from ATP to 4'-phosphopantetheine, yielding dephospho-CoA (dPCoA) and pyrophosphate. The protein is Phosphopantetheine adenylyltransferase of Cereibacter sphaeroides (strain ATCC 17025 / ATH 2.4.3) (Rhodobacter sphaeroides).